A 190-amino-acid chain; its full sequence is Probable DNA replication complex GINS protein PSF2 (190 aa).

The protein belongs to the GINS2/PSF2 family. As to quaternary structure, component of the GINS complex which is a heterotetramer of gins1, gins2, gins3 and gins4.

The protein localises to the nucleus. In terms of biological role, the GINS complex plays an essential role in the initiation of DNA replication. The chain is Probable DNA replication complex GINS protein PSF2 from Brugia malayi (Filarial nematode worm).